Here is an 87-residue protein sequence, read N- to C-terminus: Keratin-associated protein 19-3 (87 aa).

The interval Gly9–Gly82 is 23 X 2 AA repeats of G-[YCGS].

The protein belongs to the KRTAP type 19 family. As to quaternary structure, interacts with hair keratins. As to expression, strong expression in narrowly defined pattern restricted to the lower and middle cortical regions of the hair shaft in both developing and cycling hair. During hair follicle regression (catagen), expression levels decrease until expression is no longer detectable in follicles at resting stage (telogen).

In terms of biological role, in the hair cortex, hair keratin intermediate filaments are embedded in an interfilamentous matrix, consisting of hair keratin-associated proteins (KRTAP), which are essential for the formation of a rigid and resistant hair shaft through their extensive disulfide bond cross-linking with abundant cysteine residues of hair keratins. The matrix proteins include the high-sulfur and high-glycine-tyrosine keratins. This is Keratin-associated protein 19-3 (Krtap19-3) from Mus musculus (Mouse).